A 227-amino-acid polypeptide reads, in one-letter code: Germin-like protein subfamily T member 3 (227 aa).

A signal peptide spans 1–26 (MAHISQISSFLSIVLIFLALCITLFT). Residues C44 and C59 are joined by a disulfide bond. In terms of domain architecture, Cupin type-1 spans 71-219 (SGLNTPLNTS…AFKADSKTIN (149 aa)). An N-linked (GlcNAc...) asparagine glycan is attached at N78. Mn(2+) is bound by residues H119, H121, and E126. N-linked (GlcNAc...) asparagine glycosylation is present at N143. H165 contacts Mn(2+).

This sequence belongs to the germin family. Oligomer (believed to be a pentamer but probably hexamer).

The protein resides in the secreted. The protein localises to the extracellular space. It localises to the apoplast. Functionally, may play a role in plant defense. Probably has no oxalate oxidase activity even if the active site is conserved. In Arabidopsis thaliana (Mouse-ear cress), this protein is Germin-like protein subfamily T member 3.